We begin with the raw amino-acid sequence, 693 residues long: Ion-translocating oxidoreductase complex subunit C (693 aa).

4Fe-4S ferredoxin-type domains are found at residues 368-397 (MEPV…QQLY) and 407-436 (KARD…VQYY). Residues Cys377, Cys380, Cys383, Cys387, Cys416, Cys419, Cys422, and Cys426 each coordinate [4Fe-4S] cluster. Basic and acidic residues predominate over residues 539-548 (REERVREKQS). The disordered stretch occupies residues 539 to 564 (REERVREKQSQQETPATEVTPEELDP).

This sequence belongs to the 4Fe4S bacterial-type ferredoxin family. RnfC subfamily. As to quaternary structure, the complex is composed of six subunits: RnfA, RnfB, RnfC, RnfD, RnfE and RnfG. The cofactor is [4Fe-4S] cluster.

It localises to the cell inner membrane. Part of a membrane-bound complex that couples electron transfer with translocation of ions across the membrane. The sequence is that of Ion-translocating oxidoreductase complex subunit C from Pectobacterium atrosepticum (strain SCRI 1043 / ATCC BAA-672) (Erwinia carotovora subsp. atroseptica).